Consider the following 427-residue polypeptide: Enolase (427 aa).

Gln-163 contributes to the (2R)-2-phosphoglycerate binding site. Glu-205 (proton donor) is an active-site residue. Residues Asp-242, Glu-285, and Asp-312 each contribute to the Mg(2+) site. (2R)-2-phosphoglycerate contacts are provided by Lys-337, Arg-366, Ser-367, and Lys-388. The active-site Proton acceptor is Lys-337.

Belongs to the enolase family. Mg(2+) serves as cofactor.

The protein resides in the cytoplasm. Its subcellular location is the secreted. It localises to the cell surface. It catalyses the reaction (2R)-2-phosphoglycerate = phosphoenolpyruvate + H2O. It participates in carbohydrate degradation; glycolysis; pyruvate from D-glyceraldehyde 3-phosphate: step 4/5. Its function is as follows. Catalyzes the reversible conversion of 2-phosphoglycerate (2-PG) into phosphoenolpyruvate (PEP). It is essential for the degradation of carbohydrates via glycolysis. This Burkholderia vietnamiensis (strain G4 / LMG 22486) (Burkholderia cepacia (strain R1808)) protein is Enolase.